Consider the following 313-residue polypeptide: Ribosomal protein L11 methyltransferase (313 aa).

4 residues coordinate S-adenosyl-L-methionine: T161, G182, D204, and N246.

The protein belongs to the methyltransferase superfamily. PrmA family.

It localises to the cytoplasm. The enzyme catalyses L-lysyl-[protein] + 3 S-adenosyl-L-methionine = N(6),N(6),N(6)-trimethyl-L-lysyl-[protein] + 3 S-adenosyl-L-homocysteine + 3 H(+). Functionally, methylates ribosomal protein L11. The chain is Ribosomal protein L11 methyltransferase from Acetivibrio thermocellus (strain ATCC 27405 / DSM 1237 / JCM 9322 / NBRC 103400 / NCIMB 10682 / NRRL B-4536 / VPI 7372) (Clostridium thermocellum).